A 309-amino-acid polypeptide reads, in one-letter code: MAETEWTPEALSGRYEEIKSCIPQQLEAYARFLREAAPEDLRRWQQIAQDLKLELNLENGRIKYKKEFKPLELPVDICYIRHGKTQGNTEPRVFQGQVDYANNQLTQQGQQQAAAAATKLEAMAAAKEFIPDLLLSSPLLRAVHTAQPFVDANPKPLFRVLPELAEMAFGEWDNRKVAELEKDDPAHLFYLQQNAVIKAKGPHRICCQLWQSPEWLEGKKELPAENFLECLDRQRKALIKVGEIAKELCGPSCGERKPRVAVYGHSMAGAAVSVLLGFGKEDQLGFLGFDGNYIMPNATPTILIPNAKP.

The Tele-phosphohistidine intermediate role is filled by His82. Glu166 serves as the catalytic Proton donor/acceptor.

The protein belongs to the phosphoglycerate mutase family.

It catalyses the reaction D-mannitol 1-phosphate + H2O = D-mannitol + phosphate. With respect to regulation, by diethyl pyrocarbonate (DEPC). Key enzyme for mannitol biosynthesis. This Eimeria tenella (Coccidian parasite) protein is Mannitol-1-phosphatase.